The following is a 462-amino-acid chain: Cytochrome b558/566 subunit A (462 aa).

Topologically, residues 1–8 are cytoplasmic; it reads MSLKIKSK. Residues 9-26 traverse the membrane as a helical segment; that stretch reads ITIGVLLIIFLLSIIFTL. The Extracellular segment spans residues 27–431; the sequence is ENVSLAQTSP…TSTSPVTTIS (405 aa). N-linked (GlcNAc...) asparagine glycans are attached at residues Asn28, Asn65, Asn91, Asn121, Asn144, Asn164, Asn174, Asn183, Asn211, Asn278, Asn279, Asn293, Asn316, Asn339, Asn353, and Asn376. A helical transmembrane segment spans residues 432-456; it reads SAIPPVTLYVTIIGVVVALVALVIL. The Cytoplasmic segment spans residues 457 to 462; the sequence is YVVFRR.

The cofactor is heme. N-glycosylated on at least seven Asn residues by identical hexasaccharide units composed of Man, GlcNAc, Glc and 6-deoxy-6-sulfoglucose residues in the molar ration of 2:2:1:1. In terms of processing, O-glycosylated on probably as many as 35 positions by single Man residues.

The protein localises to the cell membrane. Functionally, monoheme cytochrome whose physiological function is not yet clear. This chain is Cytochrome b558/566 subunit A (cbsA), found in Sulfolobus acidocaldarius (strain ATCC 33909 / DSM 639 / JCM 8929 / NBRC 15157 / NCIMB 11770).